Here is a 170-residue protein sequence, read N- to C-terminus: Adenine phosphoribosyltransferase (170 aa).

This sequence belongs to the purine/pyrimidine phosphoribosyltransferase family. Homodimer.

The protein resides in the cytoplasm. The catalysed reaction is AMP + diphosphate = 5-phospho-alpha-D-ribose 1-diphosphate + adenine. Its pathway is purine metabolism; AMP biosynthesis via salvage pathway; AMP from adenine: step 1/1. Functionally, catalyzes a salvage reaction resulting in the formation of AMP, that is energically less costly than de novo synthesis. This chain is Adenine phosphoribosyltransferase, found in Thermotoga sp. (strain RQ2).